The following is a 624-amino-acid chain: Dihydroxy-acid dehydratase (624 aa).

Position 81 (aspartate 81) interacts with Mg(2+). Residue cysteine 122 coordinates [2Fe-2S] cluster. The Mg(2+) site is built by aspartate 123 and lysine 124. Lysine 124 is subject to N6-carboxylysine. Cysteine 195 is a [2Fe-2S] cluster binding site. Residue glutamate 499 coordinates Mg(2+). The active-site Proton acceptor is the serine 525.

Belongs to the IlvD/Edd family. As to quaternary structure, homodimer. Requires [2Fe-2S] cluster as cofactor. It depends on Mg(2+) as a cofactor.

It carries out the reaction (2R)-2,3-dihydroxy-3-methylbutanoate = 3-methyl-2-oxobutanoate + H2O. The enzyme catalyses (2R,3R)-2,3-dihydroxy-3-methylpentanoate = (S)-3-methyl-2-oxopentanoate + H2O. Its pathway is amino-acid biosynthesis; L-isoleucine biosynthesis; L-isoleucine from 2-oxobutanoate: step 3/4. The protein operates within amino-acid biosynthesis; L-valine biosynthesis; L-valine from pyruvate: step 3/4. Functionally, functions in the biosynthesis of branched-chain amino acids. Catalyzes the dehydration of (2R,3R)-2,3-dihydroxy-3-methylpentanoate (2,3-dihydroxy-3-methylvalerate) into 2-oxo-3-methylpentanoate (2-oxo-3-methylvalerate) and of (2R)-2,3-dihydroxy-3-methylbutanoate (2,3-dihydroxyisovalerate) into 2-oxo-3-methylbutanoate (2-oxoisovalerate), the penultimate precursor to L-isoleucine and L-valine, respectively. This Shewanella baltica (strain OS185) protein is Dihydroxy-acid dehydratase.